Reading from the N-terminus, the 436-residue chain is Methylenetetrahydrofolate--tRNA-(uracil-5-)-methyltransferase TrmFO (436 aa).

Position 7 to 12 (7 to 12 (GAGLAG)) interacts with FAD.

This sequence belongs to the MnmG family. TrmFO subfamily. FAD is required as a cofactor.

It localises to the cytoplasm. The catalysed reaction is uridine(54) in tRNA + (6R)-5,10-methylene-5,6,7,8-tetrahydrofolate + NADH + H(+) = 5-methyluridine(54) in tRNA + (6S)-5,6,7,8-tetrahydrofolate + NAD(+). The enzyme catalyses uridine(54) in tRNA + (6R)-5,10-methylene-5,6,7,8-tetrahydrofolate + NADPH + H(+) = 5-methyluridine(54) in tRNA + (6S)-5,6,7,8-tetrahydrofolate + NADP(+). Catalyzes the folate-dependent formation of 5-methyl-uridine at position 54 (M-5-U54) in all tRNAs. The polypeptide is Methylenetetrahydrofolate--tRNA-(uracil-5-)-methyltransferase TrmFO (Caldicellulosiruptor bescii (strain ATCC BAA-1888 / DSM 6725 / KCTC 15123 / Z-1320) (Anaerocellum thermophilum)).